A 122-amino-acid chain; its full sequence is Insulin-like 3 (122 aa).

An N-terminal signal peptide occupies residues 1–15 (MRAPLLLMLLALGSA). Cystine bridges form between Cys29-Cys107, Cys41-Cys120, and Cys106-Cys111.

It belongs to the insulin family. Heterodimer of a B chain and an A chain linked by two disulfide bonds. As to expression, expressed exclusively in Leydig cells of the testis.

Its subcellular location is the secreted. Seems to play a role in testicular function. May be a trophic hormone with a role in testicular descent in fetal life. Is a ligand for LGR8 receptor. This Mus musculus (Mouse) protein is Insulin-like 3 (Insl3).